The chain runs to 135 residues: UPF0251 protein Hore_18270 (135 aa).

This sequence belongs to the UPF0251 family.

This is UPF0251 protein Hore_18270 from Halothermothrix orenii (strain H 168 / OCM 544 / DSM 9562).